Consider the following 122-residue polypeptide: MIQSFTRLSVADNSGAKEIMCIKILGGSHRRYARVGDVIVASVKKAIPNGKVKKGQVVKAVVVRTKKEIHRENGSLVRFDDNAAVILDAKKEPIGTRIFGPVSREVRYANFMKIVSLAPEVL.

Belongs to the universal ribosomal protein uL14 family. Part of the 50S ribosomal subunit. Forms a cluster with proteins L3 and L19. In the 70S ribosome, L14 and L19 interact and together make contacts with the 16S rRNA in bridges B5 and B8.

Functionally, binds to 23S rRNA. Forms part of two intersubunit bridges in the 70S ribosome. The sequence is that of Large ribosomal subunit protein uL14 from Helicobacter hepaticus (strain ATCC 51449 / 3B1).